Reading from the N-terminus, the 394-residue chain is Glycerol-3-phosphate dehydrogenase [NAD(+)] 2 (394 aa).

NAD(+)-binding positions include 41–46 (GSGNWG), lysine 152, and alanine 185. Lysine 152 serves as a coordination point for substrate. Lysine 243 functions as the Proton acceptor in the catalytic mechanism. NAD(+)-binding residues include arginine 308 and glutamine 337. 308 to 309 (RN) lines the substrate pocket.

The protein belongs to the NAD-dependent glycerol-3-phosphate dehydrogenase family.

It catalyses the reaction sn-glycerol 3-phosphate + NAD(+) = dihydroxyacetone phosphate + NADH + H(+). The polypeptide is Glycerol-3-phosphate dehydrogenase [NAD(+)] 2 (gpd2) (Cyberlindnera jadinii (Torula yeast)).